We begin with the raw amino-acid sequence, 113 residues long: UPF0342 protein SpyM3_0545 (113 aa).

This sequence belongs to the UPF0342 family.

The protein is UPF0342 protein SpyM3_0545 of Streptococcus pyogenes serotype M3 (strain ATCC BAA-595 / MGAS315).